A 381-amino-acid chain; its full sequence is Queuine tRNA-ribosyltransferase (381 aa).

Asp-96 serves as the catalytic Proton acceptor. Residues 96–100, Asp-150, Gln-193, and Gly-220 each bind substrate; that span reads DSGGF. The segment at 251–257 is RNA binding; that stretch reads GVGSPDA. Catalysis depends on Asp-270, which acts as the Nucleophile. Residues 275 to 279 form an RNA binding; important for wobble base 34 recognition region; that stretch reads TRIAR. Residues Cys-308, Cys-310, Cys-313, and His-339 each coordinate Zn(2+).

This sequence belongs to the queuine tRNA-ribosyltransferase family. As to quaternary structure, homodimer. Within each dimer, one monomer is responsible for RNA recognition and catalysis, while the other monomer binds to the replacement base PreQ1. It depends on Zn(2+) as a cofactor.

The catalysed reaction is 7-aminomethyl-7-carbaguanine + guanosine(34) in tRNA = 7-aminomethyl-7-carbaguanosine(34) in tRNA + guanine. It participates in tRNA modification; tRNA-queuosine biosynthesis. Functionally, catalyzes the base-exchange of a guanine (G) residue with the queuine precursor 7-aminomethyl-7-deazaguanine (PreQ1) at position 34 (anticodon wobble position) in tRNAs with GU(N) anticodons (tRNA-Asp, -Asn, -His and -Tyr). Catalysis occurs through a double-displacement mechanism. The nucleophile active site attacks the C1' of nucleotide 34 to detach the guanine base from the RNA, forming a covalent enzyme-RNA intermediate. The proton acceptor active site deprotonates the incoming PreQ1, allowing a nucleophilic attack on the C1' of the ribose to form the product. After dissociation, two additional enzymatic reactions on the tRNA convert PreQ1 to queuine (Q), resulting in the hypermodified nucleoside queuosine (7-(((4,5-cis-dihydroxy-2-cyclopenten-1-yl)amino)methyl)-7-deazaguanosine). The chain is Queuine tRNA-ribosyltransferase from Bacillus velezensis (strain DSM 23117 / BGSC 10A6 / LMG 26770 / FZB42) (Bacillus amyloliquefaciens subsp. plantarum).